A 1221-amino-acid chain; its full sequence is RNA exonuclease 1 homolog (1221 aa).

Over residues 37–46 (RGSGAPGDGG) the composition is skewed to gly residues. Positions 37 to 75 (RGSGAPGDGGEAPPAAGLGYDPYNPELPKPPAQRENGTL) are disordered. Residues 86–115 (LELELVNQAIEAVRSEVELEQRRYRELLET) are a coiled coil. The interval 116–598 (TREHRSAEAP…STSSAGADVD (483 aa)) is disordered. Omega-N-methylarginine is present on R191. 3 positions are modified to phosphoserine: S287, S289, and S358. The segment covering 357-369 (ASPAQVQSSQDGG) has biased composition (low complexity). The segment covering 393-417 (AQGKDKTKDKGRGRPVEKPRADKKG) has biased composition (basic and acidic residues). S459, S499, and S526 each carry phosphoserine. Positions 492–501 (LVERKARSLD) are enriched in basic and acidic residues. The interval 498-577 (RSLDEGASQD…KRLKASPPPS (80 aa)) is interaction with ELOA. Over residues 580-593 (PSSSSSSSSSTSSA) the composition is skewed to low complexity. Residue S610 is modified to Phosphoserine. Disordered stretches follow at residues 619–692 (IFNE…TAQE) and 735–775 (HIPN…TRTL). Basic and acidic residues predominate over residues 627–648 (KTEDRGRLARQPPKEEKSEEKG). S914 carries the phosphoserine modification. The 150-residue stretch at 1060–1209 (IYALDCEMSY…EDAGACMHLV (150 aa)) folds into the Exonuclease domain.

This sequence belongs to the REXO1/REXO3 family. As to quaternary structure, interacts with TCEA2 and ELOA. Ubiquitously expressed.

The protein localises to the nucleus. Functionally, seems to have no detectable effect on transcription elongation in vitro. The chain is RNA exonuclease 1 homolog (REXO1) from Homo sapiens (Human).